We begin with the raw amino-acid sequence, 332 residues long: Heterogeneous nuclear ribonucleoprotein A/B (332 aa).

The segment at 1–66 (MSEAGEEQPM…DQINASKNEE (66 aa)) is disordered. The segment covering 29–49 (GRGWTGAAAGAGGATAAPPSG) has biased composition (low complexity). 2 RRM domains span residues 69–154 (GKMF…PVKK) and 153–233 (KKIF…QPKE). Residue Ser81 is modified to Phosphoserine. Glycyl lysine isopeptide (Lys-Gly) (interchain with G-Cter in SUMO2) cross-links involve residues Lys130 and Lys203. Lys215 bears the N6-acetyllysine mark. The interval 235 to 268 (YQQQQYGSGGRGNRNRGNRGSGGGGGGGGQSQSW) is disordered. Phosphoserine is present on Ser242. Arg245 is modified (dimethylated arginine; alternate). Arg245 is modified (omega-N-methylarginine; alternate). Omega-N-methylarginine is present on residues Arg250, Gly251, Arg253, and Gly254. Gly residues predominate over residues 253-264 (RGSGGGGGGGGQ). Ser255 and Gly256 each carry phosphoserine. An N6-acetyllysine mark is found at Gly271, Tyr272, and Lys318. Positions 311-332 (QGSTNYGKSQRRGGHQNNYKPY) are disordered. At Arg322 the chain carries Dimethylated arginine; alternate. The residue at position 322 (Arg322) is an Omega-N-methylarginine; alternate. Residue Arg322 is modified to Asymmetric dimethylarginine; alternate.

In terms of assembly, identified in a IGF2BP1-dependent mRNP granule complex containing untranslated mRNAs. Interacts with APOBEC1. In terms of processing, dimethylation at Arg-322 is probably asymmetric. Ubiquitous.

The protein resides in the nucleus. It localises to the cytoplasm. Its function is as follows. Binds single-stranded RNA. Has a high affinity for G-rich and U-rich regions of hnRNA. Also binds to APOB mRNA transcripts around the RNA editing site. The sequence is that of Heterogeneous nuclear ribonucleoprotein A/B (HNRNPAB) from Homo sapiens (Human).